Reading from the N-terminus, the 466-residue chain is Probable ribonuclease FAU-1 (466 aa).

The region spanning 90–152 is the S1 motif domain; it reads GAIYAGTVTD…TDGRPVLDTT (63 aa).

It belongs to the FAU-1 family.

Probable RNase involved in rRNA stability through maturation and/or degradation of precursor rRNAs. Binds to RNA in loop regions with AU-rich sequences. This chain is Probable ribonuclease FAU-1, found in Haloarcula marismortui (strain ATCC 43049 / DSM 3752 / JCM 8966 / VKM B-1809) (Halobacterium marismortui).